A 434-amino-acid polypeptide reads, in one-letter code: Serine hydroxymethyltransferase (434 aa).

(6S)-5,6,7,8-tetrahydrofolate is bound by residues L133 and 137–139 (GHL). K242 is subject to N6-(pyridoxal phosphate)lysine.

Belongs to the SHMT family. Homodimer. Pyridoxal 5'-phosphate is required as a cofactor.

The protein resides in the cytoplasm. It catalyses the reaction (6R)-5,10-methylene-5,6,7,8-tetrahydrofolate + glycine + H2O = (6S)-5,6,7,8-tetrahydrofolate + L-serine. The protein operates within one-carbon metabolism; tetrahydrofolate interconversion. It participates in amino-acid biosynthesis; glycine biosynthesis; glycine from L-serine: step 1/1. In terms of biological role, catalyzes the reversible interconversion of serine and glycine with tetrahydrofolate (THF) serving as the one-carbon carrier. This reaction serves as the major source of one-carbon groups required for the biosynthesis of purines, thymidylate, methionine, and other important biomolecules. Also exhibits THF-independent aldolase activity toward beta-hydroxyamino acids, producing glycine and aldehydes, via a retro-aldol mechanism. This Methylorubrum extorquens (strain CM4 / NCIMB 13688) (Methylobacterium extorquens) protein is Serine hydroxymethyltransferase.